The chain runs to 263 residues: Nicotinamide riboside transporter PnuC (263 aa).

Topologically, residues Met-1–Trp-40 are cytoplasmic. The helical transmembrane segment at Thr-41–Phe-61 threads the bilayer. Position 62 (Asn-62) is a topological domain, periplasmic. The helical transmembrane segment at Pro-63–Gly-83 threads the bilayer. Topologically, residues Lys-84–Lys-86 are cytoplasmic. The chain crosses the membrane as a helical span at residues Ile-87–Phe-107. Residues Lys-108–Leu-109 lie on the Periplasmic side of the membrane. The helical transmembrane segment at Tyr-110 to Trp-131 threads the bilayer. Gln-124 contributes to the beta-nicotinamide D-riboside binding site. Residues Arg-132 to Gln-155 lie on the Cytoplasmic side of the membrane. Residues Trp-156–Leu-177 traverse the membrane as a helical segment. Over Gly-178–Ala-180 the chain is Periplasmic. The chain crosses the membrane as a helical span at residues Leu-181–Leu-201. Gln-196 serves as a coordination point for beta-nicotinamide D-riboside. Residues Arg-202–Glu-205 are Cytoplasmic-facing. A helical membrane pass occupies residues Gln-206–Phe-226. Beta-nicotinamide D-riboside is bound by residues Trp-210 and Asn-214. Residues Lys-227 to Ser-232 lie on the Periplasmic side of the membrane. The helical transmembrane segment at Leu-233 to Trp-253 threads the bilayer. Tyr-242 contributes to the beta-nicotinamide D-riboside binding site. The Cytoplasmic segment spans residues Thr-254 to Gln-263.

The protein belongs to the nicotinamide ribonucleoside (NR) uptake permease (TC 4.B.1) family. As to quaternary structure, homotrimer.

It is found in the cell inner membrane. In terms of biological role, required for nicotinamide riboside transport across the inner membrane. This Neisseria mucosa (strain ATCC 25996 / DSM 4631 / NCTC 10774 / M26) protein is Nicotinamide riboside transporter PnuC.